Consider the following 164-residue polypeptide: Transcriptional regulator MraZ (164 aa).

SpoVT-AbrB domains follow at residues 7–57 and 86–129; these read THQN…TVGA and AYPL…NPEA. A disordered region spans residues 133–164; the sequence is RRQAARSRARTLATSRRPASAPAAGNTAGAAE. Low complexity predominate over residues 142 to 164; that stretch reads RTLATSRRPASAPAAGNTAGAAE.

It belongs to the MraZ family. As to quaternary structure, forms oligomers.

The protein localises to the cytoplasm. The protein resides in the nucleoid. In Gluconobacter oxydans (strain 621H) (Gluconobacter suboxydans), this protein is Transcriptional regulator MraZ.